The chain runs to 66 residues: MTPPHSDRPEDTADPKLLEILVCPVTKGPLELDGARRELISRSAKLAYPIRDGIPIMLPEEARKIE.

This sequence belongs to the UPF0434 family.

The polypeptide is UPF0434 protein Nwi_0075 (Nitrobacter winogradskyi (strain ATCC 25391 / DSM 10237 / CIP 104748 / NCIMB 11846 / Nb-255)).